Reading from the N-terminus, the 527-residue chain is Rhesus-like glycoprotein A (527 aa).

At 1–18 the chain is on the cytoplasmic side; it reads MTHNDDDHKWVTTKRKEP. Residues 19 to 39 form a helical membrane-spanning segment; sequence IFFTVILFIFQIFMIICFAAL. Over 40–70 the chain is Extracellular; sequence TGYDTNKNYTGSENPDEFKGGEVQERVNNFY. Asparagine 47 is a glycosylation site (N-linked (GlcNAc...) asparagine). A helical membrane pass occupies residues 71–91; sequence GYFRDINIMIFFGFGFLMTFL. At 92–99 the chain is on the cytoplasmic side; it reads RRYGYSAL. Residues 100–120 traverse the membrane as a helical segment; the sequence is GYTFIISALVSQWSVLLNGFF. Residues 121-141 lie on the Extracellular side of the membrane; that stretch reads EAWSHSNKHGEFPSTWEFSMD. The chain crosses the membrane as a helical span at residues 142–162; that stretch reads SLLQGFFCSGSVMISYGAILG. At 163–166 the chain is on the cytoplasmic side; the sequence is RVTP. A helical transmembrane segment spans residues 167 to 187; it reads LHMLIMGIIEPIFFFLNVFIG. Over 188–195 the chain is Extracellular; that stretch reads EMNLEAID. Residues 196-216 traverse the membrane as a helical segment; the sequence is VGGGMYIHLFGSVFGLTVAWF. Residues 217–236 are Cytoplasmic-facing; that stretch reads LTDRKSKECTDNAPSYSGDN. A helical transmembrane segment spans residues 237 to 257; it reads FAMAGTLFLWMMWPSFNAAIA. Over 258-263 the chain is Extracellular; that stretch reads PLGEPQ. The helical transmembrane segment at 264 to 284 threads the bilayer; that stretch reads FRAIANTFLSLTGSTVATFIV. The Cytoplasmic segment spans residues 285–299; sequence SRLFSHLGNKLDMVH. A helical membrane pass occupies residues 300–319; that stretch reads VQNSSLAGGVVQGCIAHMNI. Topologically, residues 320-321 are extracellular; that stretch reads NP. Residues 322-342 form a helical membrane-spanning segment; sequence GGAIAMGFIAGTISVCGYLFI. Topologically, residues 343–357 are cytoplasmic; sequence TPKVQRKLHIQDTCG. The chain crosses the membrane as a helical span at residues 358-378; the sequence is ILNLHCIPGFLGSIAAIFAAI. Residues 379-406 lie on the Extracellular side of the membrane; it reads KGLNNPNMYSKVEFEQIFRAGDSQASAN. Residues 407 to 427 traverse the membrane as a helical segment; it reads LIATMVSIGLGIVGGLLVGVI. At 428–527 the chain is on the cytoplasmic side; it reads LLQLKKIKGL…EEDEFKQEPI (100 aa). The tract at residues 471 to 527 is disordered; that stretch reads SEDTAGGDDEEEGVGKEHGAVEMGKHNRIVQPKQDNKYHKQLPSDDEEEDEFKQEPI. The span at 483 to 495 shows a compositional bias: basic and acidic residues; sequence GVGKEHGAVEMGK. The span at 514-527 shows a compositional bias: acidic residues; it reads SDDEEEDEFKQEPI.

This sequence belongs to the ammonium transporter (TC 2.A.49) family. Rh subfamily. In terms of assembly, interacts with ap1g1.

It localises to the contractile vacuole. The protein localises to the membrane. May be a carbon dioxide/bicarbonate transporter. The chain is Rhesus-like glycoprotein A (rhgA) from Dictyostelium discoideum (Social amoeba).